A 543-amino-acid chain; its full sequence is CTP synthase (543 aa).

Positions Met-1–Ile-265 are amidoligase domain. Residue Ser-13 coordinates CTP. Ser-13 contributes to the UTP binding site. Ser-14–Leu-19 lines the ATP pocket. Tyr-54 serves as a coordination point for L-glutamine. Asp-71 lines the ATP pocket. Residues Asp-71 and Glu-139 each coordinate Mg(2+). Residues Asp-146–Glu-148, Lys-186–Gln-191, and Lys-222 each bind CTP. Residues Lys-186–Gln-191 and Lys-222 each bind UTP. Residue Arg-238 to Val-240 participates in ATP binding. In terms of domain architecture, Glutamine amidotransferase type-1 spans Thr-291–Leu-542. Gly-353 is a binding site for L-glutamine. Cys-380 acts as the Nucleophile; for glutamine hydrolysis in catalysis. L-glutamine is bound by residues Phe-381–Gln-384, Glu-404, and Arg-470. Residues His-515 and Glu-517 contribute to the active site.

It belongs to the CTP synthase family. Homotetramer.

It carries out the reaction UTP + L-glutamine + ATP + H2O = CTP + L-glutamate + ADP + phosphate + 2 H(+). The catalysed reaction is L-glutamine + H2O = L-glutamate + NH4(+). It catalyses the reaction UTP + NH4(+) + ATP = CTP + ADP + phosphate + 2 H(+). The protein operates within pyrimidine metabolism; CTP biosynthesis via de novo pathway; CTP from UDP: step 2/2. Its activity is regulated as follows. Allosterically activated by GTP, when glutamine is the substrate; GTP has no effect on the reaction when ammonia is the substrate. The allosteric effector GTP functions by stabilizing the protein conformation that binds the tetrahedral intermediate(s) formed during glutamine hydrolysis. Inhibited by the product CTP, via allosteric rather than competitive inhibition. In terms of biological role, catalyzes the ATP-dependent amination of UTP to CTP with either L-glutamine or ammonia as the source of nitrogen. Regulates intracellular CTP levels through interactions with the four ribonucleotide triphosphates. This Bradyrhizobium diazoefficiens (strain JCM 10833 / BCRC 13528 / IAM 13628 / NBRC 14792 / USDA 110) protein is CTP synthase.